The sequence spans 328 residues: MQTAVNEFLTPRHIDVSEITPTRARVVLEPLERGFGHTLGNALRRILLSSMAGCAIVEAEIDGVLHEYSAIEGVREDVIEILLNLKGVAVVMHGKDSTVLTLSKKGPGVVTAGDIQVDHDVEIKNPDHVIANITGNTELKMRLTIARGRGYQPADSRRRDDDESRAIGRLQLDASFSPVKRLAYSVESARVEQRTDLDKLVLDLETNGTIDPEEAIRRAATILQQQLAVFVDLEGEKQSAPEQKEEAIDPILLRPVDDLELTVRSANCLKAENIYYIGDLIQRTEVELLKTPNLGKKSLTEIKDVLASRGLSLGMRLENWPPASLKND.

The interval 1–234 is alpha N-terminal domain (alpha-NTD); that stretch reads MQTAVNEFLT…QQLAVFVDLE (234 aa). Residues 248–328 form an alpha C-terminal domain (alpha-CTD) region; the sequence is IDPILLRPVD…NWPPASLKND (81 aa).

The protein belongs to the RNA polymerase alpha chain family. Homodimer. The RNAP catalytic core consists of 2 alpha, 1 beta, 1 beta' and 1 omega subunit. When a sigma factor is associated with the core the holoenzyme is formed, which can initiate transcription.

The catalysed reaction is RNA(n) + a ribonucleoside 5'-triphosphate = RNA(n+1) + diphosphate. Its function is as follows. DNA-dependent RNA polymerase catalyzes the transcription of DNA into RNA using the four ribonucleoside triphosphates as substrates. The chain is DNA-directed RNA polymerase subunit alpha from Cellvibrio japonicus (strain Ueda107) (Pseudomonas fluorescens subsp. cellulosa).